A 187-amino-acid chain; its full sequence is Elongation factor P (187 aa).

The protein belongs to the elongation factor P family.

The protein localises to the cytoplasm. It functions in the pathway protein biosynthesis; polypeptide chain elongation. Its function is as follows. Involved in peptide bond synthesis. Stimulates efficient translation and peptide-bond synthesis on native or reconstituted 70S ribosomes in vitro. Probably functions indirectly by altering the affinity of the ribosome for aminoacyl-tRNA, thus increasing their reactivity as acceptors for peptidyl transferase. The chain is Elongation factor P from Paenarthrobacter aurescens (strain TC1).